A 134-amino-acid polypeptide reads, in one-letter code: MKCSVLQMSRLSWTACVLLLPLLLLTLQGGVQGCFIRNCPRGGKRAVDSVQPTRQCMSCGPEGVGQCVGPSICCGLAIGCLMGTPEAEVCQKENESSAPCAVSGRHCGMDNTGNCVADGICCVEDACSFNSLCR.

A signal peptide spans 1–33; the sequence is MKCSVLQMSRLSWTACVLLLPLLLLTLQGGVQG. A disulfide bridge links cysteine 34 with cysteine 39. Positions 44–50 are excised as a propeptide; the sequence is KRAVDSV. 7 cysteine pairs are disulfide-bonded: cysteine 56/cysteine 100, cysteine 59/cysteine 73, cysteine 67/cysteine 90, cysteine 74/cysteine 80, cysteine 107/cysteine 121, cysteine 115/cysteine 133, and cysteine 122/cysteine 127.

It belongs to the vasopressin/oxytocin family. In terms of processing, contains 7 disulfide bonds. Expressed by the venom duct.

Its subcellular location is the secreted. The protein is Terepressin/terephysin of Terebra anilis (Auger snail).